The primary structure comprises 380 residues: Beta sliding clamp (380 aa).

The protein belongs to the beta sliding clamp family. In terms of assembly, forms a ring-shaped head-to-tail homodimer around DNA which binds and tethers DNA polymerases and other proteins to the DNA. The DNA replisome complex has a single clamp-loading complex (3 tau and 1 each of delta, delta', psi and chi subunits) which binds 3 Pol III cores (1 core on the leading strand and 2 on the lagging strand) each with a beta sliding clamp dimer. Additional proteins in the replisome are other copies of gamma, psi and chi, Ssb, DNA helicase and RNA primase.

It localises to the cytoplasm. Its function is as follows. Confers DNA tethering and processivity to DNA polymerases and other proteins. Acts as a clamp, forming a ring around DNA (a reaction catalyzed by the clamp-loading complex) which diffuses in an ATP-independent manner freely and bidirectionally along dsDNA. Initially characterized for its ability to contact the catalytic subunit of DNA polymerase III (Pol III), a complex, multichain enzyme responsible for most of the replicative synthesis in bacteria; Pol III exhibits 3'-5' exonuclease proofreading activity. The beta chain is required for initiation of replication as well as for processivity of DNA replication. This Lactococcus lactis subsp. lactis (strain IL1403) (Streptococcus lactis) protein is Beta sliding clamp (dnaN).